Consider the following 267-residue polypeptide: Formamidopyrimidine-DNA glycosylase (267 aa).

The active-site Schiff-base intermediate with DNA is the Pro-2. Glu-3 functions as the Proton donor in the catalytic mechanism. The Proton donor; for beta-elimination activity role is filled by Lys-53. Residues His-82 and Arg-100 each contribute to the DNA site. The segment at 230–264 (AVYGREGLPCPACGRPVERRVVAGRGTHFCPTCQG) adopts an FPG-type zinc-finger fold. Arg-254 acts as the Proton donor; for delta-elimination activity in catalysis.

Belongs to the FPG family. In terms of assembly, monomer. It depends on Zn(2+) as a cofactor.

It carries out the reaction Hydrolysis of DNA containing ring-opened 7-methylguanine residues, releasing 2,6-diamino-4-hydroxy-5-(N-methyl)formamidopyrimidine.. The catalysed reaction is 2'-deoxyribonucleotide-(2'-deoxyribose 5'-phosphate)-2'-deoxyribonucleotide-DNA = a 3'-end 2'-deoxyribonucleotide-(2,3-dehydro-2,3-deoxyribose 5'-phosphate)-DNA + a 5'-end 5'-phospho-2'-deoxyribonucleoside-DNA + H(+). In terms of biological role, involved in base excision repair of DNA damaged by oxidation or by mutagenic agents. Acts as a DNA glycosylase that recognizes and removes damaged bases. Has a preference for oxidized purines, such as 7,8-dihydro-8-oxoguanine (8-oxoG). Has AP (apurinic/apyrimidinic) lyase activity and introduces nicks in the DNA strand. Cleaves the DNA backbone by beta-delta elimination to generate a single-strand break at the site of the removed base with both 3'- and 5'-phosphates. This chain is Formamidopyrimidine-DNA glycosylase, found in Thermus thermophilus (strain ATCC BAA-163 / DSM 7039 / HB27).